The primary structure comprises 484 residues: tRNA-2-methylthio-N(6)-dimethylallyladenosine synthase (484 aa).

The MTTase N-terminal domain occupies 29–149 (GVFHIHTLGC…LPKLLDQNRA (121 aa)). 6 residues coordinate [4Fe-4S] cluster: C38, C78, C112, C186, C190, and C193. The 230-residue stretch at 172–401 (RASRISSWVA…VALQEQITEE (230 aa)) folds into the Radical SAM core domain. Residues 404–474 (ATFEGRDVEV…RHNLLADPDV (71 aa)) enclose the TRAM domain.

It belongs to the methylthiotransferase family. MiaB subfamily. In terms of assembly, monomer. [4Fe-4S] cluster is required as a cofactor.

The protein resides in the cytoplasm. The catalysed reaction is N(6)-dimethylallyladenosine(37) in tRNA + (sulfur carrier)-SH + AH2 + 2 S-adenosyl-L-methionine = 2-methylsulfanyl-N(6)-dimethylallyladenosine(37) in tRNA + (sulfur carrier)-H + 5'-deoxyadenosine + L-methionine + A + S-adenosyl-L-homocysteine + 2 H(+). In terms of biological role, catalyzes the methylthiolation of N6-(dimethylallyl)adenosine (i(6)A), leading to the formation of 2-methylthio-N6-(dimethylallyl)adenosine (ms(2)i(6)A) at position 37 in tRNAs that read codons beginning with uridine. The chain is tRNA-2-methylthio-N(6)-dimethylallyladenosine synthase from Bifidobacterium longum subsp. infantis (strain ATCC 15697 / DSM 20088 / JCM 1222 / NCTC 11817 / S12).